A 288-amino-acid polypeptide reads, in one-letter code: 33 kDa chaperonin (288 aa).

Intrachain disulfides connect cysteine 235/cysteine 237 and cysteine 268/cysteine 271.

The protein belongs to the HSP33 family. Under oxidizing conditions two disulfide bonds are formed involving the reactive cysteines. Under reducing conditions zinc is bound to the reactive cysteines and the protein is inactive.

It localises to the cytoplasm. Functionally, redox regulated molecular chaperone. Protects both thermally unfolding and oxidatively damaged proteins from irreversible aggregation. Plays an important role in the bacterial defense system toward oxidative stress. The polypeptide is 33 kDa chaperonin (Streptococcus thermophilus (strain ATCC BAA-250 / LMG 18311)).